A 139-amino-acid chain; its full sequence is Glutamate mutase sigma subunit (139 aa).

One can recognise a B12-binding domain in the interval 4-139 (KIKLVLGVIG…DLHADFPDHA (136 aa)). Adenosylcob(III)alamin is bound by residues 14-18 (SDCHA), His-17, 62-64 (SSL), and 94-98 (NIVVG).

This sequence belongs to the methylaspartate mutase GlmS subunit family. In terms of assembly, heterotetramer composed of 2 epsilon subunits (GlmE) and 2 sigma subunits (GlmS). GlmE exists as a homodimer and GlmS as a monomer. The cofactor is adenosylcob(III)alamin.

It catalyses the reaction (2S,3S)-3-methyl-L-aspartate = L-glutamate. The protein operates within amino-acid degradation; L-glutamate degradation via mesaconate pathway; acetate and pyruvate from L-glutamate: step 1/4. Its function is as follows. Catalyzes the carbon skeleton rearrangement of L-glutamate to L-threo-3-methylaspartate ((2S,3S)-3-methylaspartate). The chain is Glutamate mutase sigma subunit from Treponema denticola (strain ATCC 35405 / DSM 14222 / CIP 103919 / JCM 8153 / KCTC 15104).